Consider the following 545-residue polypeptide: MLAARLIILLSFYWLSASAIDPADPLFVDLPHGKIRGRDNGFYYSYESLPYAEPPVGELRFEAPQPYKQQWTDTFDATQPPVTCMQWNQFIFGDNKLAGVEDCLTVSIYKPKNTSQSSFPVVAHMHGGAFMFGEARQNGHENMMREGKLILVKISYRLGPLGFASTGDAGLSGNFGLKDQRLALLWIKQNIASFGGEPENIIVVGHSAGGASVHLQMLREDFAQVAKAGISFGGNAMDPWVIHQSARGRTFELGRIVGCGQASDSTELKNCLKSKPAGEIVSAVHSFLVFAYVPFAPFGPVVESPDAPEAFISQHPVDIIKSGKFAQVPWAVTYNTEDGGYNAAVLLEKQASSGRELIFDLNDHWFDWAPYLLFYRDSMTTIKDMDDYSRKLRQEYLGDRRFSVESYWDLQRLFTDILYKNATELALDLYRKHGKSPVYAFVYDNPANTGIGQFFSKRTDVHFGTVHGDEYFLIFENLARGPEMRSDEEIISRNFLNMINDFVVSGNGTMTFGNCVLQDNVGSNKFQLLSITKNGCENLQLESFP.

Residues 1-19 (MLAARLIILLSFYWLSASA) form the signal peptide. Cysteine 84 and cysteine 103 are oxidised to a cystine. The N-linked (GlcNAc...) asparagine glycan is linked to asparagine 113. Residue serine 207 is the Acyl-ester intermediate of the active site. Cysteine 259 and cysteine 271 are oxidised to a cystine. The N-linked (GlcNAc...) asparagine glycan is linked to asparagine 421. Histidine 467 serves as the catalytic Charge relay system. The N-linked (GlcNAc...) asparagine glycan is linked to asparagine 507. Cysteines 515 and 536 form a disulfide.

The protein belongs to the type-B carboxylesterase/lipase family.

The protein resides in the secreted. It carries out the reaction a carboxylic ester + H2O = an alcohol + a carboxylate + H(+). This chain is Esterase-5C (Est-5C), found in Drosophila persimilis (Fruit fly).